Here is a 359-residue protein sequence, read N- to C-terminus: 3-dehydroquinate synthase (359 aa).

NAD(+) contacts are provided by residues 106–110, 130–131, lysine 143, and lysine 152; these read GVVGD and TS. Zn(2+)-binding residues include glutamate 185, histidine 246, and histidine 262.

It belongs to the sugar phosphate cyclases superfamily. Dehydroquinate synthase family. Requires NAD(+) as cofactor. It depends on Co(2+) as a cofactor. Zn(2+) is required as a cofactor.

The protein localises to the cytoplasm. It carries out the reaction 7-phospho-2-dehydro-3-deoxy-D-arabino-heptonate = 3-dehydroquinate + phosphate. It functions in the pathway metabolic intermediate biosynthesis; chorismate biosynthesis; chorismate from D-erythrose 4-phosphate and phosphoenolpyruvate: step 2/7. Functionally, catalyzes the conversion of 3-deoxy-D-arabino-heptulosonate 7-phosphate (DAHP) to dehydroquinate (DHQ). In Lactiplantibacillus plantarum (strain ATCC BAA-793 / NCIMB 8826 / WCFS1) (Lactobacillus plantarum), this protein is 3-dehydroquinate synthase.